A 486-amino-acid chain; its full sequence is E3 ubiquitin-protein ligase RNF8 (486 aa).

Residues Val38–Leu92 form the FHA domain. The tract at residues Gln68–Gly72 is required for interaction with PIWIL1. At Ser157 the chain carries Phosphoserine. Residues Ser180–Glu201 are compositionally biased toward polar residues. The segment at Ser180–Leu207 is disordered. The RING-type zinc finger occupies Cys404–Arg442.

Belongs to the RNF8 family. As to quaternary structure, homodimer. Forms a E2-E3 ubiquitin ligase complex composed of the RNF8 homodimer and a E2 heterodimer of UBE2N and UBE2V2. Interacts with class III E2s, including UBE2E1, UBE2E2, and UBE2E3 and with UBE2N. Interacts with RXRA. Interacts (via FHA domain) with phosphorylated HERC2 (via C-terminus). Interacts with PIWIL1; leading to sequester RNF8 in the cytoplasm. Interacts with WRAP53/TCAB1. Autoubiquitinated through 'Lys-48' and 'Lys-63' of ubiquitin. 'Lys-63' polyubiquitination is mediated by UBE2N. 'Lys-29'-type polyubiquitination is also observed, but it doesn't require its own functional RING-type zinc finger.

Its subcellular location is the nucleus. The protein resides in the cytoplasm. It localises to the midbody. It is found in the chromosome. The protein localises to the telomere. It catalyses the reaction S-ubiquitinyl-[E2 ubiquitin-conjugating enzyme]-L-cysteine + [acceptor protein]-L-lysine = [E2 ubiquitin-conjugating enzyme]-L-cysteine + N(6)-ubiquitinyl-[acceptor protein]-L-lysine.. It participates in protein modification; protein ubiquitination. E3 ubiquitin-protein ligase that plays a key role in DNA damage signaling via 2 distinct roles: by mediating the 'Lys-63'-linked ubiquitination of histones H2A and H2AX and promoting the recruitment of DNA repair proteins at double-strand breaks (DSBs) sites, and by catalyzing 'Lys-48'-linked ubiquitination to remove target proteins from DNA damage sites. Following DNA DSBs, it is recruited to the sites of damage by ATM-phosphorylated MDC1 and catalyzes the 'Lys-63'-linked ubiquitination of histones H2A and H2AX, thereby promoting the formation of TP53BP1 and BRCA1 ionizing radiation-induced foci (IRIF). Also controls the recruitment of UIMC1-BRCC3 (RAP80-BRCC36) and PAXIP1/PTIP to DNA damage sites. Promotes the recruitment of NBN to DNA damage sites by catalyzing 'Lys-6'-linked ubiquitination of NBN. Also recruited at DNA interstrand cross-links (ICLs) sites and catalyzes 'Lys-63'-linked ubiquitination of histones H2A and H2AX, leading to recruitment of FAAP20 and Fanconi anemia (FA) complex, followed by interstrand cross-link repair. H2A ubiquitination also mediates the ATM-dependent transcriptional silencing at regions flanking DSBs in cis, a mechanism to avoid collision between transcription and repair intermediates. Promotes the formation of 'Lys-63'-linked polyubiquitin chains via interactions with the specific ubiquitin-conjugating UBE2N/UBC13 and ubiquitinates non-histone substrates such as PCNA. Substrates that are polyubiquitinated at 'Lys-63' are usually not targeted for degradation. Also catalyzes the formation of 'Lys-48'-linked polyubiquitin chains via interaction with the ubiquitin-conjugating UBE2L6/UBCH8, leading to degradation of substrate proteins such as CHEK2, JMJD2A/KDM4A and KU80/XRCC5: it is still unclear how the preference toward 'Lys-48'- versus 'Lys-63'-linked ubiquitination is regulated but it could be due to RNF8 ability to interact with specific E2 specific ligases. For instance, interaction with phosphorylated HERC2 promotes the association between RNF8 and UBE2N/UBC13 and favors the specific formation of 'Lys-63'-linked ubiquitin chains. Promotes non-homologous end joining (NHEJ) by promoting the 'Lys-48'-linked ubiquitination and degradation the of KU80/XRCC5. Following DNA damage, mediates the ubiquitination and degradation of JMJD2A/KDM4A in collaboration with RNF168, leading to unmask H4K20me2 mark and promote the recruitment of TP53BP1 at DNA damage sites. Following DNA damage, mediates the ubiquitination and degradation of POLD4/p12, a subunit of DNA polymerase delta. In the absence of POLD4, DNA polymerase delta complex exhibits higher proofreading activity. In addition to its function in damage signaling, also plays a role in higher-order chromatin structure by mediating extensive chromatin decondensation. Involved in the activation of ATM by promoting histone H2B ubiquitination, which indirectly triggers histone H4 'Lys-16' acetylation (H4K16ac), establishing a chromatin environment that promotes efficient activation of ATM kinase. Required in the testis, where it plays a role in the replacement of histones during spermatogenesis. At uncapped telomeres, promotes the joining of deprotected chromosome ends by inducing H2A ubiquitination and TP53BP1 recruitment, suggesting that it may enhance cancer development by aggravating telomere-induced genome instability in case of telomeric crisis. Promotes the assembly of RAD51 at DNA DSBs in the absence of BRCA1 and TP53BP1 Also involved in class switch recombination in immune system, via its role in regulation of DSBs repair. May be required for proper exit from mitosis after spindle checkpoint activation and may regulate cytokinesis. May play a role in the regulation of RXRA-mediated transcriptional activity. Not involved in RXRA ubiquitination by UBE2E2. The polypeptide is E3 ubiquitin-protein ligase RNF8 (Pongo abelii (Sumatran orangutan)).